A 315-amino-acid polypeptide reads, in one-letter code: Cytochrome f (315 aa).

An N-terminal signal peptide occupies residues methionine 1–alanine 36. The heme site is built by phenylalanine 37, cysteine 57, cysteine 60, and histidine 61. The helical transmembrane segment at isoleucine 281–lysine 301 threads the bilayer.

Belongs to the cytochrome f family. As to quaternary structure, the 4 large subunits of the cytochrome b6-f complex are cytochrome b6, subunit IV (17 kDa polypeptide, PetD), cytochrome f and the Rieske protein, while the 4 small subunits are PetG, PetL, PetM and PetN. The complex functions as a dimer. The cofactor is heme.

The protein localises to the cellular thylakoid membrane. Functionally, component of the cytochrome b6-f complex, which mediates electron transfer between photosystem II (PSII) and photosystem I (PSI), cyclic electron flow around PSI, and state transitions. This is Cytochrome f from Acaryochloris marina (strain MBIC 11017).